Here is a 501-residue protein sequence, read N- to C-terminus: Lysine--tRNA ligase (501 aa).

Positions 411 and 418 each coordinate Mg(2+).

Belongs to the class-II aminoacyl-tRNA synthetase family. Homodimer. The cofactor is Mg(2+).

The protein resides in the cytoplasm. It catalyses the reaction tRNA(Lys) + L-lysine + ATP = L-lysyl-tRNA(Lys) + AMP + diphosphate. This Pseudomonas aeruginosa (strain UCBPP-PA14) protein is Lysine--tRNA ligase.